Consider the following 660-residue polypeptide: MKAVVFAYHDIGCAGINALVAAGYDITAIYTHPDAPSENHFFGSVARTAAEHGIPVYAPNDVNHPLWIDRIKSAQPDVIFSFYYRNLLCDEILNSATVGAFNLHGSLLPHYRGRAPLNWVLVKGETETGVTLHKMVSRADAGAIVAQHRVAIAPEETALTLHHKLTQASSDLLKDILPVIKTGHFPEVEQDHSQASIFGRRTAQDGCIDWHATAQEISNLVRAVTDPWPGAFGYVGGSKFIVWKARALEGLQAAKAGTVLSVSPLVIATGGGALEIMTGQTENGVYMQGSQLAQTLGLVAGAIISSQPVSAIKRRTRVLILGVNGFIGNHLTERLLQDDNFEVYGLDIGSDAISRFIGNSRFHFVEGDISIHSEWIEYHIKKCDVVLPLVAIATPIEYTRNPLRVFELDFEENLKIIRDCVKYQKRIIFPSTSEVYGMCSDKVFDEDHSNLIVGPINKQRWIYSVSKQLLDRVIWAYGEKEGLRFTLFRPFNWMGPRLDNLNAARIGSSRAITQLILNLVEGSPIKLIDGGRQKRCFTDISDGIEALFRIIENKNSNCDGQIINIGNPDNEASIKELAEMLLASFEKHPLRNHFPPFAGFREVESSTYYGKGYQDVEHRKPSIRNAHRLISWTPTVEMEKTIDETLDFFLKTVELTEPQA.

Positions 1 to 304 are formyltransferase ArnAFT; the sequence is MKAVVFAYHD…TLGLVAGAII (304 aa). H104 functions as the Proton donor; for formyltransferase activity in the catalytic mechanism. Residues R114 and 136–140 contribute to the (6R)-10-formyltetrahydrofolate site; that span reads VSRAD. A dehydrogenase ArnADH region spans residues 314 to 660; the sequence is RRTRVLILGV…KTVELTEPQA (347 aa). NAD(+)-binding positions include D347 and 368 to 369; that span reads DI. UDP-alpha-D-glucuronate contacts are provided by residues A393, Y398, and 432–433; that span reads TS. E434 serves as the catalytic Proton acceptor; for decarboxylase activity. Residues R460, N492, 526-535, and Y613 each bind UDP-alpha-D-glucuronate; that span reads KLIDGGRQKR. Catalysis depends on R619, which acts as the Proton donor; for decarboxylase activity.

In the N-terminal section; belongs to the Fmt family. UDP-L-Ara4N formyltransferase subfamily. The protein in the C-terminal section; belongs to the NAD(P)-dependent epimerase/dehydratase family. UDP-glucuronic acid decarboxylase subfamily. In terms of assembly, homohexamer, formed by a dimer of trimers.

It carries out the reaction UDP-alpha-D-glucuronate + NAD(+) = UDP-beta-L-threo-pentopyranos-4-ulose + CO2 + NADH. It catalyses the reaction UDP-4-amino-4-deoxy-beta-L-arabinose + (6R)-10-formyltetrahydrofolate = UDP-4-deoxy-4-formamido-beta-L-arabinose + (6S)-5,6,7,8-tetrahydrofolate + H(+). Its pathway is nucleotide-sugar biosynthesis; UDP-4-deoxy-4-formamido-beta-L-arabinose biosynthesis; UDP-4-deoxy-4-formamido-beta-L-arabinose from UDP-alpha-D-glucuronate: step 1/3. It functions in the pathway nucleotide-sugar biosynthesis; UDP-4-deoxy-4-formamido-beta-L-arabinose biosynthesis; UDP-4-deoxy-4-formamido-beta-L-arabinose from UDP-alpha-D-glucuronate: step 3/3. The protein operates within bacterial outer membrane biogenesis; lipopolysaccharide biosynthesis. Functionally, bifunctional enzyme that catalyzes the oxidative decarboxylation of UDP-glucuronic acid (UDP-GlcUA) to UDP-4-keto-arabinose (UDP-Ara4O) and the addition of a formyl group to UDP-4-amino-4-deoxy-L-arabinose (UDP-L-Ara4N) to form UDP-L-4-formamido-arabinose (UDP-L-Ara4FN). The modified arabinose is attached to lipid A and is required for resistance to polymyxin and cationic antimicrobial peptides. In Enterobacter sp. (strain 638), this protein is Bifunctional polymyxin resistance protein ArnA.